The primary structure comprises 946 residues: Probable leucine-rich repeat receptor-like protein kinase At5g49770 (946 aa).

The N-terminal stretch at 1 to 25 (MKMSSRIGLFKLLILLFFQIYSVYA) is a signal peptide. At 26 to 561 (FTDGSDFTAL…LEDSKTVSMK (536 aa)) the chain is on the extracellular side. LRR repeat units lie at residues 67-91 (DNRV…ISTL), 92-116 (SELQ…IGNL), 118-140 (KLTF…IGNL), 141-164 (EQLT…MGRL), 166-191 (KLYW…SLPG), 195-219 (LLQT…LFSS), 221-244 (MTLL…LGLV), 245-268 (QNLT…LNNL), 269-293 (TNLQ…SLTS), 295-314 (YTLD…SWIP), 316-340 (LNSL…LFSP), 342-365 (QLQT…NYSK), 367-387 (LDFV…ANNP), and 389-407 (NVML…QLSG). 3 N-linked (GlcNAc...) asparagine glycosylation sites follow: Asn-246, Asn-267, and Asn-287. 2 N-linked (GlcNAc...) asparagine glycosylation sites follow: Asn-354 and Asn-362. 4 N-linked (GlcNAc...) asparagine glycosylation sites follow: Asn-415, Asn-460, Asn-489, and Asn-514. The helical transmembrane segment at 562–582 (VIIGVVVGVVVLLLLLALAGI) threads the bilayer. The Cytoplasmic portion of the chain corresponds to 583–946 (YALRQKKRAQ…YTGVFPTPKP (364 aa)). The region spanning 634–908 (FSDANDVGGG…EVVQELESIL (275 aa)) is the Protein kinase domain. Residues 640-648 (VGGGGYGQV) and Lys-662 contribute to the ATP site. Residue Asp-758 is the Proton acceptor of the active site. The disordered stretch occupies residues 919-946 (SATYEEASGDPYGRDSFEYTGVFPTPKP).

It belongs to the protein kinase superfamily. Ser/Thr protein kinase family.

Its subcellular location is the membrane. It carries out the reaction L-seryl-[protein] + ATP = O-phospho-L-seryl-[protein] + ADP + H(+). It catalyses the reaction L-threonyl-[protein] + ATP = O-phospho-L-threonyl-[protein] + ADP + H(+). This chain is Probable leucine-rich repeat receptor-like protein kinase At5g49770, found in Arabidopsis thaliana (Mouse-ear cress).